The primary structure comprises 214 residues: Ribosomal RNA small subunit methyltransferase G (214 aa).

Residues glycine 77, phenylalanine 82, 128–129 (VE), and arginine 143 each bind S-adenosyl-L-methionine.

The protein belongs to the methyltransferase superfamily. RNA methyltransferase RsmG family.

It is found in the cytoplasm. The enzyme catalyses guanosine(527) in 16S rRNA + S-adenosyl-L-methionine = N(7)-methylguanosine(527) in 16S rRNA + S-adenosyl-L-homocysteine. Its function is as follows. Specifically methylates the N7 position of guanine in position 527 of 16S rRNA. The sequence is that of Ribosomal RNA small subunit methyltransferase G from Nitrosomonas europaea (strain ATCC 19718 / CIP 103999 / KCTC 2705 / NBRC 14298).